We begin with the raw amino-acid sequence, 350 residues long: Dihydroorotase (350 aa).

Residues His-17 and His-19 each coordinate Zn(2+). Residues 19–21 (HFR) and Asn-45 each bind substrate. 3 residues coordinate Zn(2+): Lys-103, His-140, and His-178. The residue at position 103 (Lys-103) is an N6-carboxylysine. His-140 contacts substrate. A substrate-binding site is contributed by Leu-223. Asp-251 contacts Zn(2+). Residue Asp-251 is part of the active site. Substrate is bound by residues His-255 and Ala-267.

This sequence belongs to the metallo-dependent hydrolases superfamily. DHOase family. Class II DHOase subfamily. As to quaternary structure, homodimer. The cofactor is Zn(2+).

The enzyme catalyses (S)-dihydroorotate + H2O = N-carbamoyl-L-aspartate + H(+). Its pathway is pyrimidine metabolism; UMP biosynthesis via de novo pathway; (S)-dihydroorotate from bicarbonate: step 3/3. In terms of biological role, catalyzes the reversible cyclization of carbamoyl aspartate to dihydroorotate. The protein is Dihydroorotase of Photorhabdus laumondii subsp. laumondii (strain DSM 15139 / CIP 105565 / TT01) (Photorhabdus luminescens subsp. laumondii).